A 106-amino-acid chain; its full sequence is Large ribosomal subunit protein uL24 (106 aa).

It belongs to the universal ribosomal protein uL24 family. In terms of assembly, part of the 50S ribosomal subunit.

Functionally, one of two assembly initiator proteins, it binds directly to the 5'-end of the 23S rRNA, where it nucleates assembly of the 50S subunit. One of the proteins that surrounds the polypeptide exit tunnel on the outside of the subunit. The polypeptide is Large ribosomal subunit protein uL24 (Delftia acidovorans (strain DSM 14801 / SPH-1)).